Here is a 158-residue protein sequence, read N- to C-terminus: Phosphopantetheine adenylyltransferase (158 aa).

The protein belongs to the eukaryotic CoaD family.

Its subcellular location is the cytoplasm. The catalysed reaction is (R)-4'-phosphopantetheine + ATP + H(+) = 3'-dephospho-CoA + diphosphate. It participates in cofactor biosynthesis; coenzyme A biosynthesis. Its function is as follows. Reversibly transfers an adenylyl group from ATP to 4'-phosphopantetheine, yielding dephospho-CoA (dPCoA) and pyrophosphate. This is Phosphopantetheine adenylyltransferase from Pyrococcus horikoshii (strain ATCC 700860 / DSM 12428 / JCM 9974 / NBRC 100139 / OT-3).